Consider the following 132-residue polypeptide: MAKEFSRTQRVAQEMQKEIAIIIQREVKDPRIGMATVSGVEVSRDLAYAKVFVTFLNDNEPEQVKTALKALQDASGFIRTLVGKAMRLRVVPALTFSYDNSLVEGMRMSNLVTNVVRNDTERRSVTGEDQED.

It belongs to the RbfA family. In terms of assembly, monomer. Binds 30S ribosomal subunits, but not 50S ribosomal subunits or 70S ribosomes.

The protein localises to the cytoplasm. One of several proteins that assist in the late maturation steps of the functional core of the 30S ribosomal subunit. Associates with free 30S ribosomal subunits (but not with 30S subunits that are part of 70S ribosomes or polysomes). Required for efficient processing of 16S rRNA. May interact with the 5'-terminal helix region of 16S rRNA. The chain is Ribosome-binding factor A from Pectobacterium carotovorum subsp. carotovorum (strain PC1).